The primary structure comprises 213 residues: Orotate phosphoribosyltransferase (213 aa).

A 5-phospho-alpha-D-ribose 1-diphosphate-binding site is contributed by K26. 34-35 is an orotate binding site; sequence FF. 5-phospho-alpha-D-ribose 1-diphosphate is bound by residues 72–73, R99, K100, K103, H105, and 124–132; these read YK and DDVITAGTA. The orotate site is built by T128 and R156.

Belongs to the purine/pyrimidine phosphoribosyltransferase family. PyrE subfamily. In terms of assembly, homodimer. The cofactor is Mg(2+).

The enzyme catalyses orotidine 5'-phosphate + diphosphate = orotate + 5-phospho-alpha-D-ribose 1-diphosphate. It functions in the pathway pyrimidine metabolism; UMP biosynthesis via de novo pathway; UMP from orotate: step 1/2. Catalyzes the transfer of a ribosyl phosphate group from 5-phosphoribose 1-diphosphate to orotate, leading to the formation of orotidine monophosphate (OMP). The chain is Orotate phosphoribosyltransferase from Klebsiella pneumoniae subsp. pneumoniae (strain ATCC 700721 / MGH 78578).